The following is a 240-amino-acid chain: 5-oxoprolinase subunit B (240 aa).

194–201 (GWQLIGKT) contacts ATP.

Belongs to the PxpB family. Forms a complex composed of PxpA, PxpB and PxpC. Interacts with PxpC (KipA). Interaction with PxpC prevents the inhibitory action of PxpB (KipI). Interacts with KinA. Two PxpB monomers bind via their C-domains at a conserved proline in the KinA dimerization and histidine-phosphotransfer (DHp) domain.

The catalysed reaction is 5-oxo-L-proline + ATP + 2 H2O = L-glutamate + ADP + phosphate + H(+). Catalyzes the cleavage of 5-oxoproline to form L-glutamate coupled to the hydrolysis of ATP to ADP and inorganic phosphate. In addition, is a potent inhibitor of the autophosphorylation reaction of kinase A (kinA) and its reverse reaction, but does not inhibit phosphate transfer to the Spo0F response regulator once kinase A is phosphorylated. Is an inhibitor of the catalytic domain of kinase A affecting the ATP/ADP reactions and not the phosphotransferase functions of this domain. The inhibition is non-competitive with respect to ATP. The protein is 5-oxoprolinase subunit B of Bacillus subtilis (strain 168).